The following is a 396-amino-acid chain: Elongation factor Tu (396 aa).

One can recognise a tr-type G domain in the interval 10 to 206 (KPHVNVGTIG…ALDSYIPTPE (197 aa)). Positions 19-26 (GHVDHGKT) are G1. 19–26 (GHVDHGKT) serves as a coordination point for GTP. Mg(2+) is bound at residue T26. Residues 60-64 (GITIN) are G2. Residues 81–84 (DCPG) form a G3 region. GTP contacts are provided by residues 81–85 (DCPGH) and 136–139 (NKCD). A G4 region spans residues 136–139 (NKCD). The G5 stretch occupies residues 174-176 (SAK).

Belongs to the TRAFAC class translation factor GTPase superfamily. Classic translation factor GTPase family. EF-Tu/EF-1A subfamily. As to quaternary structure, monomer.

Its subcellular location is the cytoplasm. The enzyme catalyses GTP + H2O = GDP + phosphate + H(+). Its function is as follows. GTP hydrolase that promotes the GTP-dependent binding of aminoacyl-tRNA to the A-site of ribosomes during protein biosynthesis. This is Elongation factor Tu from Ralstonia nicotianae (strain ATCC BAA-1114 / GMI1000) (Ralstonia solanacearum).